Consider the following 358-residue polypeptide: UDP-N-acetylglucosamine--N-acetylmuramyl-(pentapeptide) pyrophosphoryl-undecaprenol N-acetylglucosamine transferase (358 aa).

UDP-N-acetyl-alpha-D-glucosamine is bound by residues 10 to 12 (TGG), asparagine 124, arginine 165, serine 187, isoleucine 243, and glutamine 288.

The protein belongs to the glycosyltransferase 28 family. MurG subfamily.

The protein localises to the cell inner membrane. It catalyses the reaction di-trans,octa-cis-undecaprenyl diphospho-N-acetyl-alpha-D-muramoyl-L-alanyl-D-glutamyl-meso-2,6-diaminopimeloyl-D-alanyl-D-alanine + UDP-N-acetyl-alpha-D-glucosamine = di-trans,octa-cis-undecaprenyl diphospho-[N-acetyl-alpha-D-glucosaminyl-(1-&gt;4)]-N-acetyl-alpha-D-muramoyl-L-alanyl-D-glutamyl-meso-2,6-diaminopimeloyl-D-alanyl-D-alanine + UDP + H(+). Its pathway is cell wall biogenesis; peptidoglycan biosynthesis. Functionally, cell wall formation. Catalyzes the transfer of a GlcNAc subunit on undecaprenyl-pyrophosphoryl-MurNAc-pentapeptide (lipid intermediate I) to form undecaprenyl-pyrophosphoryl-MurNAc-(pentapeptide)GlcNAc (lipid intermediate II). The polypeptide is UDP-N-acetylglucosamine--N-acetylmuramyl-(pentapeptide) pyrophosphoryl-undecaprenol N-acetylglucosamine transferase (Syntrophotalea carbinolica (strain DSM 2380 / NBRC 103641 / GraBd1) (Pelobacter carbinolicus)).